The following is a 372-amino-acid chain: Spermidine/putrescine import ATP-binding protein PotA (372 aa).

In terms of domain architecture, ABC transporter spans 12-250; sequence VSIRSVRKVY…PRNRFVADFI (239 aa). 48-55 serves as a coordination point for ATP; sequence GPSGCGKT.

This sequence belongs to the ABC transporter superfamily. Spermidine/putrescine importer (TC 3.A.1.11.1) family. The complex is composed of two ATP-binding proteins (PotA), two transmembrane proteins (PotB and PotC) and a solute-binding protein (PotD).

The protein resides in the cell inner membrane. It catalyses the reaction ATP + H2O + polyamine-[polyamine-binding protein]Side 1 = ADP + phosphate + polyamineSide 2 + [polyamine-binding protein]Side 1.. Its function is as follows. Part of the ABC transporter complex PotABCD involved in spermidine/putrescine import. Responsible for energy coupling to the transport system. The sequence is that of Spermidine/putrescine import ATP-binding protein PotA from Pseudomonas fluorescens (strain ATCC BAA-477 / NRRL B-23932 / Pf-5).